We begin with the raw amino-acid sequence, 230 residues long: Uracil-DNA glycosylase (230 aa).

Asp-70 functions as the Proton acceptor in the catalytic mechanism.

This sequence belongs to the uracil-DNA glycosylase (UDG) superfamily. UNG family.

Its subcellular location is the cytoplasm. It catalyses the reaction Hydrolyzes single-stranded DNA or mismatched double-stranded DNA and polynucleotides, releasing free uracil.. Its function is as follows. Excises uracil residues from the DNA which can arise as a result of misincorporation of dUMP residues by DNA polymerase or due to deamination of cytosine. In Campylobacter concisus (strain 13826), this protein is Uracil-DNA glycosylase.